Reading from the N-terminus, the 75-residue chain is Translation initiation factor IF-1 (75 aa).

The 75-residue stretch at 1–75 (MANLPKEQKL…SKGRIVYRFK (75 aa)) folds into the S1-like domain.

This sequence belongs to the IF-1 family. As to quaternary structure, component of the 30S ribosomal translation pre-initiation complex which assembles on the 30S ribosome in the order IF-2 and IF-3, IF-1 and N-formylmethionyl-tRNA(fMet); mRNA recruitment can occur at any time during PIC assembly.

The protein resides in the cytoplasm. One of the essential components for the initiation of protein synthesis. Stabilizes the binding of IF-2 and IF-3 on the 30S subunit to which N-formylmethionyl-tRNA(fMet) subsequently binds. Helps modulate mRNA selection, yielding the 30S pre-initiation complex (PIC). Upon addition of the 50S ribosomal subunit IF-1, IF-2 and IF-3 are released leaving the mature 70S translation initiation complex. This is Translation initiation factor IF-1 from Mesomycoplasma hyopneumoniae (strain 232) (Mycoplasma hyopneumoniae).